A 313-amino-acid chain; its full sequence is MTLEQIKEIYSRPLTELILQALEIHNKNFGNDIELCSLKSIKTGTCPEDCKYCPQSGHYNTSIEKHKLLDKDSILAEAKNAKDAGSKRFCMGAAWKHIPKKDFDQVAEIITEVKNLGLETCVTLGSINAEEATKLKEAGLDYYNHNLDTSREFYPEIITTRKFEERIETIRNVANADINVCCGGILGMGESLDDRFNLLLELLQLPAAPKSIPINTLIPVKGTPLGDKYTDAQIDSFELVRFIATTRILFPQARLRLSAGRENMSLETQTLCFLAGINSIFYGNKLLTENNATINSDNFLLAKLGLESNVELC.

In terms of domain architecture, Radical SAM core spans 28 to 258 (NFGNDIELCS…LFPQARLRLS (231 aa)). The [4Fe-4S] cluster site is built by Cys46, Cys50, and Cys53. Positions 90, 121, 181, and 256 each coordinate [2Fe-2S] cluster.

This sequence belongs to the radical SAM superfamily. Biotin synthase family. Homodimer. [4Fe-4S] cluster is required as a cofactor. It depends on [2Fe-2S] cluster as a cofactor.

It carries out the reaction (4R,5S)-dethiobiotin + (sulfur carrier)-SH + 2 reduced [2Fe-2S]-[ferredoxin] + 2 S-adenosyl-L-methionine = (sulfur carrier)-H + biotin + 2 5'-deoxyadenosine + 2 L-methionine + 2 oxidized [2Fe-2S]-[ferredoxin]. Its pathway is cofactor biosynthesis; biotin biosynthesis; biotin from 7,8-diaminononanoate: step 2/2. Catalyzes the conversion of dethiobiotin (DTB) to biotin by the insertion of a sulfur atom into dethiobiotin via a radical-based mechanism. The chain is Biotin synthase from Francisella philomiragia subsp. philomiragia (strain ATCC 25017 / CCUG 19701 / FSC 153 / O#319-036).